The chain runs to 206 residues: Ribonuclease HII (206 aa).

In terms of domain architecture, RNase H type-2 spans 18–206; sequence GRVAGVDEVG…PVREWLEANS (189 aa). Positions 24, 25, and 116 each coordinate a divalent metal cation.

Belongs to the RNase HII family. Mn(2+) serves as cofactor. The cofactor is Mg(2+).

It is found in the cytoplasm. It carries out the reaction Endonucleolytic cleavage to 5'-phosphomonoester.. Endonuclease that specifically degrades the RNA of RNA-DNA hybrids. This is Ribonuclease HII from Shewanella amazonensis (strain ATCC BAA-1098 / SB2B).